The primary structure comprises 271 residues: Arginine and glutamate-rich protein 1 (271 aa).

Composition is skewed to basic residues over residues 1-29 (MGRS…RSRS) and 37-58 (VRKR…RSRS). The segment at 1-72 (MGRSRSRSSS…AAASRRERER (72 aa)) is necessary and sufficient for RNA binding. The disordered stretch occupies residues 1 to 112 (MGRSRSRSSS…EKKAEFERQR (112 aa)). Serine 58 and serine 60 each carry phosphoserine. Threonine 61 is modified (phosphothreonine). Basic and acidic residues-rich tracts occupy residues 66-82 (SRRE…RIDI) and 91-112 (SSLD…ERQR). Residues 73–271 (ASSPPDRIDI…KLSFSLKTQD (199 aa)) form a necessary and sufficient for transcriptional regulation region. Phosphoserine occurs at positions 74 and 75. The short motif at 170-174 (LLEEL) is the LXXLL motif 1; degenerate element. The LXXLL motif 2; degenerate motif lies at 199 to 203 (LERIL). Residues 236-251 (MKLEQERQRQQKEEQK) are compositionally biased toward basic and acidic residues. A disordered region spans residues 236-271 (MKLEQERQRQQKEEQKIILGKGKSRPKLSFSLKTQD). Serine 264 is subject to Phosphoserine.

The protein belongs to the ARGLU1 family. In terms of assembly, interacts with MED1; the interaction is direct. Interacts with PUF60, U2AF2 and JMJD6; may interact with other proteins involved in RNA processing and splicing. High expression levels in the neocortex, hippocampus and thalamus but low expression levels in the midbrain and hindbrain (at protein level). Ubiquitously expressed with highest expression levels in the central nervous system and low expression in uterus and pancreas.

It localises to the nucleus. The protein resides in the nucleus speckle. It is found in the chromosome. Its function is as follows. Dual function regulator of gene expression; regulator of transcription and modulator of alternative splicing. General coactivator of nuclear receptor-induced gene expression, including genes activated by the glucocorticoid receptor NR3C1. Binds to a subset of pre-mRNAs and to components of the spliceosome machinery to directly modulate basal alternative splicing; involved in simple and complex cassette exon splicing events. Binds its own pre-mRNA and regulates its alternative splicing and degradation; one of the alternatively spliced products is a stable intronic sequence RNA (sisRNA) that binds the protein to regulate its ability to affect splicing. Binding of the sisRNA stimulates phase separation and localization to nuclear speckles, which may contribute to activation of nuclear receptor-induced gene expression. May also indirectly modulate alternative splicing. Regulates transcription of genes involved in heart development, neuronal cell function, protein localization and chromatin localization. Regulates splicing of genes involved in neurogenesis and chromatin organization. Essential for central nervous system development. Required for the estrogen-dependent expression of ESR1 target genes. Can act in cooperation with MED1. The sequence is that of Arginine and glutamate-rich protein 1 (Arglu1) from Mus musculus (Mouse).